The sequence spans 246 residues: 1-(5-phosphoribosyl)-5-[(5-phosphoribosylamino)methylideneamino] imidazole-4-carboxamide isomerase (246 aa).

Asp-12 acts as the Proton acceptor in catalysis. Catalysis depends on Asp-134, which acts as the Proton donor.

Belongs to the HisA/HisF family.

Its subcellular location is the cytoplasm. The catalysed reaction is 1-(5-phospho-beta-D-ribosyl)-5-[(5-phospho-beta-D-ribosylamino)methylideneamino]imidazole-4-carboxamide = 5-[(5-phospho-1-deoxy-D-ribulos-1-ylimino)methylamino]-1-(5-phospho-beta-D-ribosyl)imidazole-4-carboxamide. The protein operates within amino-acid biosynthesis; L-histidine biosynthesis; L-histidine from 5-phospho-alpha-D-ribose 1-diphosphate: step 4/9. The polypeptide is 1-(5-phosphoribosyl)-5-[(5-phosphoribosylamino)methylideneamino] imidazole-4-carboxamide isomerase (Psychrobacter cryohalolentis (strain ATCC BAA-1226 / DSM 17306 / VKM B-2378 / K5)).